The chain runs to 1433 residues: DNA polymerase III PolC-type (1433 aa).

The Exonuclease domain maps to 419–575; the sequence is FVVFDVETTG…YDAEATGHLL (157 aa).

The protein belongs to the DNA polymerase type-C family. PolC subfamily.

The protein resides in the cytoplasm. The enzyme catalyses DNA(n) + a 2'-deoxyribonucleoside 5'-triphosphate = DNA(n+1) + diphosphate. Required for replicative DNA synthesis. This DNA polymerase also exhibits 3' to 5' exonuclease activity. This Halalkalibacterium halodurans (strain ATCC BAA-125 / DSM 18197 / FERM 7344 / JCM 9153 / C-125) (Bacillus halodurans) protein is DNA polymerase III PolC-type.